The primary structure comprises 92 residues: Putative protein pog (92 aa).

This is Putative protein pog from Acute bee paralysis virus (strain Rothamsted) (ABPV).